Reading from the N-terminus, the 316-residue chain is MKAENNSQKDNLHPRNLHRSRYDFELLISNCPELKAFISINKHGIETVDFSNPLAVKTLNKALLQTYYDIQNWDIPKNYLCPPIPGRADYIHYLADLLAETNNGKIPEGNSVMGLDIGTGANLIYPILGNSIYNWSFVATDIYKTSIENASKIIEANPRLIDAVSLQQQTEPRFIFKNIIIPEDRFTFTMCNPPFHASAEEANKSTSRKVSNLNPKEKKNTNPVLNFGGQNAELWCNGGEIGFITQMIYESVKYASQVLWFTTLVSKKENLSSIYKTLKKVNAVSVKTIEMSQGQKNSRIVAWSFLNNTEQKSWKF.

The segment at 200–222 (EEANKSTSRKVSNLNPKEKKNTN) is disordered. Over residues 204–214 (KSTSRKVSNLN) the composition is skewed to polar residues.

The protein belongs to the methyltransferase superfamily. METTL16/RlmF family.

The protein localises to the cytoplasm. The enzyme catalyses adenosine(1618) in 23S rRNA + S-adenosyl-L-methionine = N(6)-methyladenosine(1618) in 23S rRNA + S-adenosyl-L-homocysteine + H(+). In terms of biological role, specifically methylates the adenine in position 1618 of 23S rRNA. This is Ribosomal RNA large subunit methyltransferase F from Flavobacterium johnsoniae (strain ATCC 17061 / DSM 2064 / JCM 8514 / BCRC 14874 / CCUG 350202 / NBRC 14942 / NCIMB 11054 / UW101) (Cytophaga johnsonae).